A 295-amino-acid polypeptide reads, in one-letter code: Ribose-phosphate pyrophosphokinase (295 aa).

ATP-binding positions include Asp46–Glu48 and Arg101–Gln102. The Mg(2+) site is built by His132 and Asp171. The active site involves Lys194. 2 residues coordinate D-ribose 5-phosphate: Arg196 and Asp220.

It belongs to the ribose-phosphate pyrophosphokinase family. Class III (archaeal) subfamily. Requires Mg(2+) as cofactor.

The protein localises to the cytoplasm. It carries out the reaction D-ribose 5-phosphate + ATP = 5-phospho-alpha-D-ribose 1-diphosphate + AMP + H(+). It participates in metabolic intermediate biosynthesis; 5-phospho-alpha-D-ribose 1-diphosphate biosynthesis; 5-phospho-alpha-D-ribose 1-diphosphate from D-ribose 5-phosphate (route I): step 1/1. Involved in the biosynthesis of the central metabolite phospho-alpha-D-ribosyl-1-pyrophosphate (PRPP) via the transfer of pyrophosphoryl group from ATP to 1-hydroxyl of ribose-5-phosphate (Rib-5-P). This chain is Ribose-phosphate pyrophosphokinase, found in Methanosarcina mazei (strain ATCC BAA-159 / DSM 3647 / Goe1 / Go1 / JCM 11833 / OCM 88) (Methanosarcina frisia).